A 219-amino-acid chain; its full sequence is Large ribosomal subunit protein uL3 (219 aa).

Residues 124 to 154 (FSGSIKRHNQSEGPKSHGSRYHRRPGSMGPI) form a disordered region.

The protein belongs to the universal ribosomal protein uL3 family. Part of the 50S ribosomal subunit. Forms a cluster with proteins L14 and L19.

Its function is as follows. One of the primary rRNA binding proteins, it binds directly near the 3'-end of the 23S rRNA, where it nucleates assembly of the 50S subunit. This is Large ribosomal subunit protein uL3 from Phytoplasma mali (strain AT).